Consider the following 214-residue polypeptide: Probable transaldolase (214 aa).

Residue Lys-83 is the Schiff-base intermediate with substrate of the active site.

It belongs to the transaldolase family. Type 3B subfamily.

It localises to the cytoplasm. The catalysed reaction is D-sedoheptulose 7-phosphate + D-glyceraldehyde 3-phosphate = D-erythrose 4-phosphate + beta-D-fructose 6-phosphate. It functions in the pathway carbohydrate degradation; pentose phosphate pathway; D-glyceraldehyde 3-phosphate and beta-D-fructose 6-phosphate from D-ribose 5-phosphate and D-xylulose 5-phosphate (non-oxidative stage): step 2/3. Functionally, transaldolase is important for the balance of metabolites in the pentose-phosphate pathway. This chain is Probable transaldolase, found in Streptococcus equi subsp. zooepidemicus (strain H70).